The sequence spans 246 residues: uncharacterized protein (246 aa).

This is an uncharacterized protein from Campylobacter jejuni subsp. jejuni serotype O:2 (strain ATCC 700819 / NCTC 11168).